The chain runs to 322 residues: Germ cell-specific gene 1-like protein (322 aa).

At 1–8 the chain is on the cytoplasmic side; that stretch reads MKTSRRGR. The chain crosses the membrane as a helical span at residues 9-29; sequence ALLAVALNLLALLFATTAFLT. Topologically, residues 30–122 are extracellular; the sequence is TYWCQGTQRV…FIDLAPASEK (93 aa). The helical transmembrane segment at 123 to 143 threads the bilayer; the sequence is GVLWLSVVSEVLYILLLVVGF. Topologically, residues 144 to 163 are cytoplasmic; it reads SLMCLELVHSSSVIDGLKLN. The helical transmembrane segment at 164-184 threads the bilayer; it reads AFAAVFTVLSGLLGMVAHMMY. Residues 185–207 lie on the Extracellular side of the membrane; that stretch reads TQVFQVTVSLGPEDWRPHSWDYG. The helical transmembrane segment at 208 to 228 threads the bilayer; that stretch reads WSFCLAWGSFTCCMAASVTTL. Residues 229–322 lie on the Cytoplasmic side of the membrane; the sequence is NSYTKTVIEF…RQCWVLGHWV (94 aa). Phosphoserine is present on serine 274.

The protein belongs to the GSG1 family. Component of the inner core of AMPAR complexes. AMPAR complexes consist of an inner core made of 4 pore-forming GluA/GRIA proteins (GRIA1, GRIA2, GRIA3 and GRIA4) and 4 major auxiliary subunits arranged in a twofold symmetry. One of the two pairs of distinct binding sites is occupied either by CNIH2, CNIH3 or CACNG2, CACNG3. The other harbors CACNG2, CACNG3, CACNG4, CACNG8 or GSG1L. This inner core of AMPAR complexes is complemented by outer core constituents binding directly to the GluA/GRIA proteins at sites distinct from the interaction sites of the inner core constituents. Outer core constituents include at least PRRT1, PRRT2, CKAMP44/SHISA9, FRRS1L and NRN1. The proteins of the inner and outer core serve as a platform for other, more peripherally associated AMPAR constituents. Alone or in combination, these auxiliary subunits control the gating and pharmacology of the AMPAR complexes and profoundly impact their biogenesis and protein processing. In terms of tissue distribution, expressed in the brain, including hippocampus (at protein level).

It localises to the cell membrane. It is found in the synapse. Functionally, as a component of the inner core of AMPAR complexes, modifies AMPA receptor (AMPAR) gating. This chain is Germ cell-specific gene 1-like protein (Gsg1l), found in Mus musculus (Mouse).